A 557-amino-acid chain; its full sequence is Urocanate hydratase (557 aa).

The disordered stretch occupies residues 1–20; that stretch reads MSNPRHNEREVRSPRGDELN. NAD(+)-binding positions include 52–53, Gln130, 176–178, Glu196, Arg201, 242–243, 263–267, 273–274, and Tyr322; these read GG, GMG, NA, QTSAH, and YL. Cys410 is a catalytic residue. Gly492 is an NAD(+) binding site.

Belongs to the urocanase family. It depends on NAD(+) as a cofactor.

It localises to the cytoplasm. It catalyses the reaction 4-imidazolone-5-propanoate = trans-urocanate + H2O. Its pathway is amino-acid degradation; L-histidine degradation into L-glutamate; N-formimidoyl-L-glutamate from L-histidine: step 2/3. Its function is as follows. Catalyzes the conversion of urocanate to 4-imidazolone-5-propionate. The protein is Urocanate hydratase of Brucella ovis (strain ATCC 25840 / 63/290 / NCTC 10512).